The sequence spans 548 residues: Zinc metalloproteinase dpy-31 (548 aa).

The first 24 residues, 1 to 24 (MSLLRSASLLLVVVTAALPPCTLG), serve as a signal peptide directing secretion. A propeptide spanning residues 25 to 150 (YSLHDGSRLD…KTGQRRVKRK (126 aa)) is cleaved from the precursor. A Peptidase M12A domain is found at 150-349 (KFIGSDLRRW…IRLMNKIYCS (200 aa)). Asparagine 190 carries N-linked (GlcNAc...) asparagine glycosylation. 5 cysteine pairs are disulfide-bonded: cysteine 193–cysteine 348, cysteine 216–cysteine 237, cysteine 352–cysteine 372, cysteine 374–cysteine 383, and cysteine 394–cysteine 422. Histidine 245 serves as a coordination point for Zn(2+). The active site involves glutamate 246. Residues histidine 249 and histidine 255 each coordinate Zn(2+). The 41-residue stretch at 344 to 384 (NKIYCSNVCSRKLPCQRGGYTDPRRCDRCRCPDGFTGQFCE) folds into the EGF-like domain. The CUB domain maps to 394–510 (CGGRIQVNSG…RGFEARARAL (117 aa)). An N-linked (GlcNAc...) asparagine glycan is attached at asparagine 461. In terms of domain architecture, TSP type-1 spans 513-547 (NGQWASWTPWTPCTASCGACGSRMRTRVCPHGACP). 3 disulfides stabilise this stretch: cysteine 525-cysteine 546, cysteine 529-cysteine 546, and cysteine 541-cysteine 546.

It depends on Zn(2+) as a cofactor.

The protein resides in the secreted. Metalloprotease which cleaves the carboxyl terminus of procollagens to mature collagens. Probably involved in cuticular collagen maturation. The sequence is that of Zinc metalloproteinase dpy-31 from Haemonchus contortus (Barber pole worm).